A 359-amino-acid chain; its full sequence is DNA polymerase IV (359 aa).

A UmuC domain is found at 6–186 (IIHVDMDAFY…LPIEAFWGVG (181 aa)). Residues D10 and D104 each coordinate Mg(2+). The active site involves E105.

Belongs to the DNA polymerase type-Y family. As to quaternary structure, monomer. It depends on Mg(2+) as a cofactor.

It localises to the cytoplasm. The enzyme catalyses DNA(n) + a 2'-deoxyribonucleoside 5'-triphosphate = DNA(n+1) + diphosphate. Its function is as follows. Poorly processive, error-prone DNA polymerase involved in untargeted mutagenesis. Copies undamaged DNA at stalled replication forks, which arise in vivo from mismatched or misaligned primer ends. These misaligned primers can be extended by PolIV. Exhibits no 3'-5' exonuclease (proofreading) activity. May be involved in translesional synthesis, in conjunction with the beta clamp from PolIII. In Akkermansia muciniphila (strain ATCC BAA-835 / DSM 22959 / JCM 33894 / BCRC 81048 / CCUG 64013 / CIP 107961 / Muc), this protein is DNA polymerase IV.